A 210-amino-acid polypeptide reads, in one-letter code: Somatotropin (210 aa).

Residues 1–22 (MAKALVLLSLVLVSVFVNNGTA) form the signal peptide. Histidine 38 is a binding site for Zn(2+). Cysteine 71 and cysteine 183 are oxidised to a cystine. A Zn(2+)-binding site is contributed by glutamate 192. A disulfide bridge connects residues cysteine 200 and cysteine 208.

The protein belongs to the somatotropin/prolactin family.

It is found in the secreted. Its function is as follows. Growth hormone plays an important role in growth control and is involved in the regulation of several anabolic processes. Implicated as an osmoregulatory substance important for seawater adaptation. This Misgurnus mizolepis (Chinese weatherloach) protein is Somatotropin (gh).